Here is a 11197-residue protein sequence, read N- to C-terminus: Nonribosomal peptide synthetase 5 (11197 aa).

The tract at residues 19 to 413 (AQRARKQPDA…DGTLQVVGHK (395 aa)) is adenylation (A) domain 1. Residues 426–452 (HASSSASSVGETPGVTGPISTPMGDSV) are disordered. The tract at residues 690-897 (KQLRQFCQEQ…LMDESMKQQI (208 aa)) is condensation (C) domain 1. The segment at 918 to 1310 (DAAQDYPDAP…GRHDGQLKVR (393 aa)) is adenylation (A) domain 2. The Carrier 1 domain occupies 1446–1522 (ADRSPVHMML…DMANNIAISE (77 aa)). An O-(pantetheine 4'-phosphoryl)serine modification is found at Ser-1483. Residues 1952 to 2380 (VEDVYPCSPV…SDISLMDPLS (429 aa)) are condensation (C) domain 2. The adenylation (A) domain 3 stretch occupies residues 2406 to 2805 (VARIEPDKMA…QRKDTQIKIR (400 aa)). The region spanning 2945 to 3021 (DSLTSTEVTI…SLAAFVDYDS (77 aa)) is the Carrier 2 domain. Ser-2982 is subject to O-(pantetheine 4'-phosphoryl)serine. Positions 3041–3481 (EESFALSPIQ…TSTMKSEFTL (441 aa)) are epimerase (E) domain 1. The condensation (C) domain 3 stretch occupies residues 3515–3957 (EEIFPCSPMQ…VSPETRCELD (443 aa)). Residues 3976 to 4371 (FEQQVEKIPD…RRRDNQVKVR (396 aa)) are adenylation (A) domain 4. The region spanning 4508-4584 (RKLTPMEQQL…ELANHARFKA (77 aa)) is the Carrier 3 domain. Ser-4545 is modified (O-(pantetheine 4'-phosphoryl)serine). The epimerase (E) domain 2 stretch occupies residues 4603 to 5022 (FPLLPIQRMF…LNEYTAALRS (420 aa)). The tract at residues 5069-5501 (ESIYPCSPLQ…LVGDSERQGL (433 aa)) is condensation (C) domain 4. An adenylation (A) domain 5 region spans residues 5521-5918 (EAQVKAIPDN…RRKDTQVKVR (398 aa)). The Carrier 4 domain occupies 6068-6141 (SEAEDIIRAV…ALAQFVSQST (74 aa)). Ser-6102 bears the O-(pantetheine 4'-phosphoryl)serine mark. An epimerase (E) domain 3 region spans residues 6162-6512 (FSLSPIQQMF…MEILFNYFGQ (351 aa)). The tract at residues 6636 to 7076 (EEIFPCSPIQ…LVGAETRREM (441 aa)) is condensation (C) domain 5. Residues 7097 to 7491 (ERNSQAMPDR…RRRDNQVKVR (395 aa)) form an adenylation (A) domain 6 region. The region spanning 7636–7712 (KPKTKMEEHF…DLAGRSRFKN (77 aa)) is the Carrier 5 domain. An O-(pantetheine 4'-phosphoryl)serine modification is found at Ser-7673. The tract at residues 7733 to 8162 (ALLPIQRLFF…KYMLETLASQ (430 aa)) is epimerase (E) domain 4. The segment at 8205-8638 (EASYPCSPLQ…MLGDSGRKRI (434 aa)) is condensation (C) domain 6. The tract at residues 8660–8832 (EAHVKESPNR…DHRATATEIV (173 aa)) is adenylation (A) domain 7. A Carrier 6 domain is found at 9173 to 9248 (SAQTAVVQII…AMAAKAQQIG (76 aa)). Ser-9209 carries the O-(pantetheine 4'-phosphoryl)serine modification. An epimerase (E) domain 5 region spans residues 9565-9683 (RVKDMRRAIP…LHEVVSALQK (119 aa)). A condensation (C) domain 7 region spans residues 9721–10116 (VEDVYPTSPM…LVPAKHMEQL (396 aa)). An adenylation (A) domain 8 region spans residues 10136-10529 (DDMVRSTPTA…VGRKDTQIKI (394 aa)). A Carrier 7 domain is found at 10663 to 10749 (LDSSDYVAMQ…TLAVTIKADM (87 aa)). Ser-10708 bears the O-(pantetheine 4'-phosphoryl)serine mark. The interval 10806-11104 (NFLVTGSTGF…SLRPMSGPEW (299 aa)) is thioesterase (TE) domain.

Belongs to the NRP synthetase family.

It functions in the pathway secondary metabolite biosynthesis. Its function is as follows. Nonribosomal peptide synthetase; part of the Fg3_54/C64 gene cluster that mediates the biosynthesis of the octapeptide fusaoctaxin A, a virulence factor that is required for cell-to-cell invasiveness of plant host. The 2 nonribosomal peptide synthetases NRPS9 and NRPS5 form an assembly line which likely utilizes GABA as a starter unit (loaded on the unique module M1 of NRPS9) and sequentially incorporates seven extender units composed of the residues L-Ala, L-allo-Ile, L-Ser, L-Val, L-Ser, L-Leu and L-Leu, respectively. During the process, each of the residues that are tethered on modules M3-M7 of NRPS5 containing an E domain can undergo an epimerization reaction to produce a D-configuration before the transpeptidation reaction occurs. The elongation of the peptidyl chain might be terminated by module M8-mediated L-Leu incorporation, followed by R domain-catalyzed 4 electron reduction to release the resulting octapeptide from the assembly line as an alcohol. Fusaoctaxin A is cleaved by the cluster specific ABC transporter FGM5 to the pentapeptide fusapentaxin A and the tripeptide fusatrixin A. The other enzymes from the cluster, FGM1, FGM2, FGM3 and FGM9 seem not to be involved in the biosynthesis of fusaoctaxin A and their functions have still to be determined. The protein is Nonribosomal peptide synthetase 5 of Gibberella zeae (strain ATCC MYA-4620 / CBS 123657 / FGSC 9075 / NRRL 31084 / PH-1) (Wheat head blight fungus).